The following is a 757-amino-acid chain: Cartilage oligomeric matrix protein (757 aa).

The signal sequence occupies residues 1–20 (MVPDTACVLLLTLAALGASG). A COMP N-terminal region spans residues 22-86 (GQSPLGSDLG…SVRTGLPSVR (65 aa)). Residues 87 to 126 (PLLHCAPGFCFPGVACIQTESGARCGPCPAGFTGNGSHCT) enclose the EGF-like 1 domain. Cystine bridges form between cysteine 91–cysteine 102, cysteine 96–cysteine 111, cysteine 114–cysteine 125, cysteine 131–cysteine 142, cysteine 136–cysteine 151, cysteine 154–cysteine 178, cysteine 184–cysteine 197, cysteine 191–cysteine 206, cysteine 209–cysteine 221, cysteine 229–cysteine 243, cysteine 237–cysteine 253, cysteine 255–cysteine 266, cysteine 282–cysteine 287, cysteine 292–cysteine 312, cysteine 328–cysteine 348, cysteine 351–cysteine 371, cysteine 387–cysteine 407, cysteine 410–cysteine 430, cysteine 448–cysteine 468, cysteine 484–cysteine 504, and cysteine 520–cysteine 741. A glycan (N-linked (GlcNAc...) asparagine) is linked at asparagine 121. In terms of domain architecture, EGF-like 2; calcium-binding spans 127–179 (DVNECNAHPCFPRVRCINTSPGFRCEACPPGYSGPTHQGVGLAFAKANKQVCT). Positions 180–222 (DINECETGQHNCVPNSVCINTRGSFQCGPCQPGFVGDQASGCQ) constitute an EGF-like 3; calcium-binding domain. The EGF-like 4 domain occupies 225–267 (AQRFCPDGSPSECHEHADCVLERDGSRSCVCAVGWAGNGILCG). TSP type-3 repeat units lie at residues 268–300 (RDTDLDGFPDEKLRCPERQCRKDNCVTVPNSGQ), 301–336 (EDVDRDGIGDACDPDADGDGVPNEKDNCPLVRNPDQ), 337–359 (RNTDEDKWGDACDNCRSQKNDDQ), 360–395 (KDTDQDGRGDACDDDIDGDRIRNQADNCPRVPNSDQ), 396–418 (KDSDGDGIGDACDNCPQKSNPDQ), 419–456 (ADVDHDFVGDACDSDQDQDGDGHQDSRDNCPTVPNSAQ), 457–492 (EDSDHDGQGDACDDDDDNDGVPDSRDNCRLVPNPGQ), and 493–528 (EDADRDGVGDVCQDDFDADKVVDKIDVCPENAEVTL). The disordered stretch occupies residues 298–503 (SGQEDVDRDG…DADRDGVGDV (206 aa)). 2 stretches are compositionally biased toward basic and acidic residues: residues 334–346 (PDQRNTDEDKWGD) and 352–370 (RSQKNDDQKDTDQDGRGDA). Residues 367–369 (RGD) carry the Cell attachment site motif. Over residues 467–476 (ACDDDDDNDG) the composition is skewed to acidic residues. The mediates cell survival and induction of the IAP family of survival proteins stretch occupies residues 527–757 (TLTDFRAFQT…DYETHQLRQA (231 aa)). Residues 532–746 (RAFQTVVLDP…LRYRCNDTIP (215 aa)) form the TSP C-terminal domain. N-linked (GlcNAc...) asparagine glycosylation is present at asparagine 742.

Belongs to the thrombospondin family. As to quaternary structure, pentamer; disulfide-linked. Exists in a more compact conformation in the presence of calcium and shows a more extended conformation in the absence of calcium. Interacts with ITGB3, ITGA5 and FN1. Binding to FN1 requires the presence of divalent cations (Ca(2+), Mg(2+) or Mn(2+)). The greatest amount of binding is seen in the presence of Mn(2+). Interacts with MATN1, MATN3, MATN4 and ACAN. Binds heparin, heparan sulfate and chondroitin sulfate. EDTA dimishes significantly its binding to ACAN and abolishes its binding to MATN3, MATN4 and chondroitin sulfate. Interacts with collagen I, II and IX, and interaction with these collagens is dependent on the presence of zinc ions. Interacts with ADAMTS12. Interacts with ITGA7. Ca(2+) is required as a cofactor. In terms of processing, proteolytically cleaved by metalloproteases ADAMTS4 and ADAMTS1 with ADAMTS4 showing more potent activity. In terms of tissue distribution, abundantly expressed in the chondrocyte extracellular matrix, and is also found in bone, tendon, ligament and synovium and blood vessels. Increased amounts are produced during late stages of osteoarthritis in the area adjacent to the main defect.

Its subcellular location is the secreted. It localises to the extracellular space. It is found in the extracellular matrix. Functionally, plays a role in the structural integrity of cartilage via its interaction with other extracellular matrix proteins such as the collagens and fibronectin. Can mediate the interaction of chondrocytes with the cartilage extracellular matrix through interaction with cell surface integrin receptors. Could play a role in the pathogenesis of osteoarthritis. Potent suppressor of apoptosis in both primary chondrocytes and transformed cells. Suppresses apoptosis by blocking the activation of caspase-3 and by inducing the IAP family of survival proteins (BIRC3, BIRC2, BIRC5 and XIAP). Essential for maintaining a vascular smooth muscle cells (VSMCs) contractile/differentiated phenotype under physiological and pathological stimuli. Maintains this phenotype of VSMCs by interacting with ITGA7. The protein is Cartilage oligomeric matrix protein of Homo sapiens (Human).